The primary structure comprises 805 residues: MEAEDDERAEAEAEARREKEAGNAAYRKLYLETAVRHYTRGALLDPRDISFLTNRAAAYLLMSKYKECVRDCDEAVEKGRELRADNKLVARALARKASALLKLAACAADYDPAIRALQQSLAEHYSEETLAKLGEAEEARKEIEERERLDQEAADHHRDRGNDFFKQKRYQEAAMHYTEAMKKNPKDPRVFSNRAQCHIYLGALPEGLEDADKCIALDPTFLKGYLRKAKVQLLMGNYEIALATYVEGLKCDPNNLEVLDGLRRCAACIKRANGGDSRAEDLREILGDLHLNDDLCNKLQKSMDEAAVLKKEASDERLKRIESERLARTLEDLYLSQVQQRKETEESLSRVQQEFEQLKIQQDEVTVELQRVNEQNENLLGQLSDSREHFEWLLSEHDQLLRERDNAVREVEELRQKRGQMLSVLVTAMHCEFSSSEVESATENFSNSLKIGEGGFGCVYKGILRNMTVAIKVLRPDSLQGQSQFEQEVSILSRVRHPHLVTLLGACSESSTLVYEFLPNGSLEDFLMCSDKRQTLTWQARIRIIAEICSALIFLHKNKPHPVVHGDLKPANILLGVNLVSKLSDFGISRLLIQSSTNNTTLYRTMHPVGTPLYMDPEFLSTGELTPQSDVYSFGIVVLRLLTGKPPVGIKNIVEDAMEKGDLNSVIDTSVGEWPHLHIEQLAYLALRCTELSRRCRPDLSGEVWAIVEAIRDAALSSPSSSRSAQDQNSPPSYFICPISQDIMDDPHIAADGFTYEAEAIRSWLCNGHDTSPMTNLLLEHEELIPNRALRSAIQEWLQQHSMSL.

TPR repeat units lie at residues 15–48, 49–82, 90–127, 129–153, 154–187, 189–221, and 222–255; these read ARREKEAGNAAYRKLYLETAVRHYTRGALLDPRD, ISFLTNRAAAYLLMSKYKECVRDCDEAVEKGREL, ARALARKASALLKLAACAADYDPAIRALQQSLAEHYSE, TLAKLGEAEEARKEIEERERLDQEA, ADHHRDRGNDFFKQKRYQEAAMHYTEAMKKNPKD, RVFSNRAQCHIYLGALPEGLEDADKCIALDPTF, and LKGYLRKAKVQLLMGNYEIALATYVEGLKCDPNN. A disordered region spans residues 136–160; sequence AEEARKEIEERERLDQEAADHHRDR. Residues 341–417 adopt a coiled-coil conformation; sequence RKETEESLSR…VREVEELRQK (77 aa). The Protein kinase domain maps to 445 to 711; that stretch reads FSNSLKIGEG…GEVWAIVEAI (267 aa). ATP contacts are provided by residues 451–459 and Lys-472; that span reads IGEGGFGCV. Asp-567 serves as the catalytic Proton acceptor. In terms of domain architecture, U-box spans 730–804; sequence SPPSYFICPI…QEWLQQHSMS (75 aa).

The protein belongs to the protein kinase superfamily. Ser/Thr protein kinase family. Interacts with MODD.

It carries out the reaction L-seryl-[protein] + ATP = O-phospho-L-seryl-[protein] + ADP + H(+). The enzyme catalyses L-threonyl-[protein] + ATP = O-phospho-L-threonyl-[protein] + ADP + H(+). It catalyses the reaction S-ubiquitinyl-[E2 ubiquitin-conjugating enzyme]-L-cysteine + [acceptor protein]-L-lysine = [E2 ubiquitin-conjugating enzyme]-L-cysteine + N(6)-ubiquitinyl-[acceptor protein]-L-lysine.. It functions in the pathway protein modification; protein ubiquitination. Functions as an E3 ubiquitin ligase. Is recruited by MODD to promote ubiquitination of BZIP46, a positive regulator of abscisic acid (ABA) signaling and drought stress tolerance. The sequence is that of U-box domain-containing protein 70 from Oryza sativa subsp. japonica (Rice).